The sequence spans 1497 residues: Collagen alpha-1(XVII) chain (1497 aa).

Disordered regions lie at residues Met-1–Arg-154 and Gly-167–Pro-186. At Met-1–Trp-467 the chain is on the cytoplasmic side. Positions Met-1–Arg-566 are nonhelical region (NC16). The segment covering Arg-9–Val-19 has biased composition (basic and acidic residues). Composition is skewed to polar residues over residues Leu-57–Ser-96 and Arg-169–Leu-183. The tract at residues Arg-145–Ser-230 is necessary for interaction with DST and for the recruitment of DST to hemidesmosome. Residues Leu-468–Leu-488 traverse the membrane as a helical; Signal-anchor for type II membrane protein segment. At Ala-489 to Pro-1497 the chain is on the extracellular side. Ser-544 carries the post-translational modification Phosphoserine; by CK2. Disordered regions lie at residues Asn-562 to Gly-1011, Gly-1209 to Ala-1234, and Ser-1261 to Gly-1316. Residues Gly-567–Gln-1482 are triple-helical region. Over residues Pro-590–Gln-602 the composition is skewed to pro residues. Low complexity-rich tracts occupy residues Pro-604 to Ala-635, Pro-661 to Pro-673, Glu-735 to Asp-748, and Asp-774 to Pro-796. Pro residues-rich tracts occupy residues Pro-820 to Ala-841, Pro-858 to Pro-881, and Pro-907 to Pro-916. Low complexity-rich tracts occupy residues Gly-936–Gly-946 and Pro-968–Ser-987. 3 stretches are compositionally biased toward pro residues: residues Pro-994–Pro-1004, Pro-1214–Pro-1228, and Pro-1266–Pro-1275. Residues Ser-1289–Ser-1312 are compositionally biased toward low complexity. The N-linked (GlcNAc...) asparagine glycan is linked to Asn-1421. Positions Gly-1434–Pro-1497 are disordered. The span at Ala-1458–Pro-1469 shows a compositional bias: pro residues. The segment covering His-1472–Asp-1481 has biased composition (basic and acidic residues). The tract at residues Val-1483–Pro-1497 is nonhelical region (NC1). The segment covering Gly-1486–Pro-1497 has biased composition (basic residues).

As to quaternary structure, homotrimers of alpha 1(XVII)chains. Interacts (via cytoplasmic region) with ITGB4 (via cytoplasmic region). Interacts (via cytoplasmic region) with DST isoform 3 (via N-terminus). Interacts (via N-terminus) with PLEC. Interacts (via cytoplasmic region) with DSP. Post-translationally, the intracellular/endo domain is disulfide-linked. In terms of processing, prolines at the third position of the tripeptide repeating unit (G-X-Y) are hydroxylated in some or all of the chains. The ectodomain is shedded from the surface of keratinocytes resulting in a 120-kDa soluble form, also named as 120 kDa linear IgA disease antigen. The shedding is mediated by membrane-bound metalloproteases. This cleavage is inhibited by phosphorylation at Ser-544. Detected in skin. In the cornea, it is detected in the epithelial basement membrane, the epithelial cells, and at a lower level in stromal cells (at protein level). Stratified squamous epithelia. Found in hemidesmosomes. Expressed in cornea, oral mucosa, esophagus, intestine, kidney collecting ducts, ureter, bladder, urethra and thymus but is absent in lung, blood vessels, skeletal muscle and nerves.

The protein resides in the cell junction. The protein localises to the hemidesmosome. It is found in the membrane. It localises to the secreted. Its subcellular location is the extracellular space. The protein resides in the extracellular matrix. The protein localises to the basement membrane. In terms of biological role, may play a role in the integrity of hemidesmosome and the attachment of basal keratinocytes to the underlying basement membrane. Its function is as follows. The 120 kDa linear IgA disease antigen is an anchoring filament component involved in dermal-epidermal cohesion. Is the target of linear IgA bullous dermatosis autoantibodies. This Homo sapiens (Human) protein is Collagen alpha-1(XVII) chain (COL17A1).